Here is a 414-residue protein sequence, read N- to C-terminus: Dual-specificity RNA methyltransferase RlmN (414 aa).

The segment covering 1 to 13 has biased composition (polar residues); the sequence is MTSAVGISVPNTD. Residues 1 to 22 form a disordered region; sequence MTSAVGISVPNTDAQSSQSASQ. Glutamate 124 functions as the Proton acceptor in the catalytic mechanism. The region spanning 134–377 is the Radical SAM core domain; the sequence is TGSRKTLCIS…CTIRQTRGDD (244 aa). Cysteine 141 and cysteine 382 are joined by a disulfide. The [4Fe-4S] cluster site is built by cysteine 148, cysteine 152, and cysteine 155. S-adenosyl-L-methionine contacts are provided by residues 204 to 205, serine 236, 258 to 260, and asparagine 339; these read GE and SLH. The active-site S-methylcysteine intermediate is the cysteine 382.

This sequence belongs to the radical SAM superfamily. RlmN family. Requires [4Fe-4S] cluster as cofactor.

It localises to the cytoplasm. The enzyme catalyses adenosine(2503) in 23S rRNA + 2 reduced [2Fe-2S]-[ferredoxin] + 2 S-adenosyl-L-methionine = 2-methyladenosine(2503) in 23S rRNA + 5'-deoxyadenosine + L-methionine + 2 oxidized [2Fe-2S]-[ferredoxin] + S-adenosyl-L-homocysteine. It carries out the reaction adenosine(37) in tRNA + 2 reduced [2Fe-2S]-[ferredoxin] + 2 S-adenosyl-L-methionine = 2-methyladenosine(37) in tRNA + 5'-deoxyadenosine + L-methionine + 2 oxidized [2Fe-2S]-[ferredoxin] + S-adenosyl-L-homocysteine. Its function is as follows. Specifically methylates position 2 of adenine 2503 in 23S rRNA and position 2 of adenine 37 in tRNAs. m2A2503 modification seems to play a crucial role in the proofreading step occurring at the peptidyl transferase center and thus would serve to optimize ribosomal fidelity. This chain is Dual-specificity RNA methyltransferase RlmN, found in Acinetobacter baylyi (strain ATCC 33305 / BD413 / ADP1).